The sequence spans 20 residues: Major extrapallial fluid protein (20 aa).

Residues 1-20 (NPVDDHHDDHHDAPIVEHHD) are disordered.

In terms of assembly, homodimer. Post-translationally, glycosylated.

In terms of biological role, appears to be a building block of the soluble organic matrix of the shell. The protein binds calcium. In Mytilus edulis (Blue mussel), this protein is Major extrapallial fluid protein.